Here is a 334-residue protein sequence, read N- to C-terminus: Glycerol-1-phosphate dehydrogenase [NAD(P)+] (334 aa).

Residues 77 to 81 and 99 to 102 each bind NAD(+); these read GKPID and TTAS. Asp104 contributes to the substrate binding site. Ser108 serves as a coordination point for NAD(+). Asp147 contributes to the substrate binding site. The Zn(2+) site is built by Asp147 and His225. Residue His229 coordinates substrate. His246 provides a ligand contact to Zn(2+).

This sequence belongs to the glycerol-1-phosphate dehydrogenase family. Zn(2+) serves as cofactor.

The protein resides in the cytoplasm. The catalysed reaction is sn-glycerol 1-phosphate + NAD(+) = dihydroxyacetone phosphate + NADH + H(+). The enzyme catalyses sn-glycerol 1-phosphate + NADP(+) = dihydroxyacetone phosphate + NADPH + H(+). It functions in the pathway membrane lipid metabolism; glycerophospholipid metabolism. Catalyzes the NAD(P)H-dependent reduction of dihydroxyacetonephosphate (DHAP or glycerone phosphate) to glycerol 1-phosphate (G1P). The G1P thus generated is used as the glycerophosphate backbone of phospholipids in the cellular membranes of Archaea. The polypeptide is Glycerol-1-phosphate dehydrogenase [NAD(P)+] (Methanococcus vannielii (strain ATCC 35089 / DSM 1224 / JCM 13029 / OCM 148 / SB)).